Reading from the N-terminus, the 127-residue chain is Large ribosomal subunit protein bL20c (127 aa).

It belongs to the bacterial ribosomal protein bL20 family.

It localises to the plastid. The protein localises to the chloroplast. Its function is as follows. Binds directly to 23S ribosomal RNA and is necessary for the in vitro assembly process of the 50S ribosomal subunit. It is not involved in the protein synthesizing functions of that subunit. The sequence is that of Large ribosomal subunit protein bL20c from Jasminum nudiflorum (Winter jasmine).